The primary structure comprises 433 residues: MGTIQTLPGTRDILPEEIGYWQYVETVATQILSRAMYYEIRPPIFEQTSLFERGIGEATDVVGKEMYTFSDRGDRSLTLRPEGTAGVVRAYLQNNLYAAGGVQRLWYCGPMFRYERPQAGRQRQFHQIGLELIGTADPRADVEVIALATDILKTLGLQSLKLDINSVGDRNDRQNYREALVNYFLPYKAELDTDSQDRLQRNPLRILDSKDKRTKEINQNAPSILEHLGDASKKHFDQVQQLLTDLGIEYNINPCLVRGLDYYTHTAFEMISDDLGAQATVCGGGRYDGLVEELGGNPTPAVGWAIGMERLIILLKQLQSSPDMTPDIYIVSRGEAAEGQGLILAQKLRKEGLTVELDMSGSAFGKQFKRADRSGAIACIVLGEEEATNKTVQLKWLQSKEQQAMTQAELLTKVGELIEQLDRHKRTMNHSTQ.

It belongs to the class-II aminoacyl-tRNA synthetase family. As to quaternary structure, homodimer.

The protein resides in the cytoplasm. The catalysed reaction is tRNA(His) + L-histidine + ATP = L-histidyl-tRNA(His) + AMP + diphosphate + H(+). This is Histidine--tRNA ligase from Crocosphaera subtropica (strain ATCC 51142 / BH68) (Cyanothece sp. (strain ATCC 51142)).